Reading from the N-terminus, the 277-residue chain is Large ribosomal subunit protein uL2 (277 aa).

3 disordered regions span residues 1-23, 36-58, and 219-277; these read MAIKKYKPTSNGRRGMTSSDFAE, PLHKKGGRNNQGKLTVRHQGGGH, and TVRG…RKNK. The segment covering 8 to 20 has biased composition (polar residues); that stretch reads PTSNGRRGMTSSD. A compositionally biased stretch (basic residues) spans 258–277; sequence KTRKKKNKSDKFIVRRRKNK.

Belongs to the universal ribosomal protein uL2 family. As to quaternary structure, part of the 50S ribosomal subunit. Forms a bridge to the 30S subunit in the 70S ribosome.

In terms of biological role, one of the primary rRNA binding proteins. Required for association of the 30S and 50S subunits to form the 70S ribosome, for tRNA binding and peptide bond formation. It has been suggested to have peptidyltransferase activity; this is somewhat controversial. Makes several contacts with the 16S rRNA in the 70S ribosome. The sequence is that of Large ribosomal subunit protein uL2 from Bacillus licheniformis (strain ATCC 14580 / DSM 13 / JCM 2505 / CCUG 7422 / NBRC 12200 / NCIMB 9375 / NCTC 10341 / NRRL NRS-1264 / Gibson 46).